We begin with the raw amino-acid sequence, 101 residues long: TrfB transcriptional repressor protein (101 aa).

The segment at residues 37–56 is a DNA-binding region (H-T-H motif); it reads QATFATSLGLTRGAVSQAVH.

Functionally, in conjunction with KorB, inhibits the transcription of kilA, trfA and korAB operons. In conjunction with KorC is responsible for the negative control of kilC and kilE operons. The chain is TrfB transcriptional repressor protein (trfB) from Escherichia coli.